Here is a 181-residue protein sequence, read N- to C-terminus: Large ribosomal subunit protein uL5c (181 aa).

Belongs to the universal ribosomal protein uL5 family. In terms of assembly, part of the 50S ribosomal subunit; contacts the 5S rRNA.

It localises to the plastid. Its subcellular location is the chloroplast. In terms of biological role, binds 5S rRNA, forms part of the central protuberance of the 50S subunit. In Pyropia yezoensis (Susabi-nori), this protein is Large ribosomal subunit protein uL5c (rpl5).